The primary structure comprises 358 residues: Insulin gene enhancer protein isl-2b (358 aa).

2 consecutive LIM zinc-binding domains span residues 27–80 (CVGC…CKRD) and 89–143 (CAKC…RADH). A DNA-binding region (homeobox) is located at residues 191 to 250 (TTRVRTVLNEKQLHTLRTCYNANPRPDALMKEQLVEMTGLSPRVIRVWFQNKRCKDKKRS). Positions 325–335 (ESGSLGNSSGS) are enriched in low complexity. Residues 325–358 (ESGSLGNSSGSDVTSLSSQLPDTPNSMVPSPVET) form a disordered region. The segment covering 336–358 (DVTSLSSQLPDTPNSMVPSPVET) has biased composition (polar residues).

The protein localises to the nucleus. Functionally, binds to one of the cis-acting domain of the insulin gene enhancer. May be involved in the regional specification of the myotome and also in target recognition by the caudal primary neuron. This Danio rerio (Zebrafish) protein is Insulin gene enhancer protein isl-2b (isl2b).